A 335-amino-acid chain; its full sequence is MDRNFLNESNNSTNNRNKYVIYDEEESKPLFYNYDFRKKNKMVMYLFDWMMVVILLIVGGILFLKVTVRGRLFTLDDESISYPKLPELVPMHVLIPVIIALPLAIIIVVSLIVKRDCHDFHHAILGLAQSLALTLLLTGSFKCFIGGLRPNFLEVCDPTPASIAAGNPPVGFSKIYYDRSICSADDSIVNDALSAYPSGHSSITAASFGFLALFIHAKFKIFDNRGHIFLYVIVSGCIIGAGLIGISRVADYRHTFLNVLAGWSIGLIIALSCYRLNYSSLFGRDNHVSIHSHWLTYWNHHDNLNNNNNNIKNNFDLEKNCNQSPNNIALDELNK.

6 consecutive transmembrane segments (helical) span residues 43-63 (VMYLFDWMMVVILLIVGGILF), 93-113 (VLIPVIIALPLAIIIVVSLIV), 124-144 (ILGLAQSLALTLLLTGSFKCF), 202-222 (SITAASFGFLALFIHAKFKIF), 226-246 (GHIFLYVIVSGCIIGAGLIGI), and 254-274 (HTFLNVLAGWSIGLIIALSCY).

It belongs to the PA-phosphatase related phosphoesterase family.

The protein localises to the membrane. The polypeptide is PA-phosphatase related-family protein DDB_G0275547 (Dictyostelium discoideum (Social amoeba)).